The primary structure comprises 247 residues: uncharacterized protein (247 aa).

Residue 4 to 28 (ALVTGGSRGIGRATALLLAQEGYTV) coordinates NADP(+). Ser-142 contacts substrate. The active-site Proton acceptor is Tyr-156.

The protein belongs to the short-chain dehydrogenases/reductases (SDR) family.

This is an uncharacterized protein from Escherichia coli (strain K12).